The sequence spans 184 residues: dCTP deaminase (184 aa).

Residues 107 to 112 (KSTYAR), 131 to 133 (TLE), Q152, Y166, and Q176 contribute to the dCTP site. The Proton donor/acceptor role is filled by E133.

The protein belongs to the dCTP deaminase family. As to quaternary structure, homotrimer.

It catalyses the reaction dCTP + H2O + H(+) = dUTP + NH4(+). The protein operates within pyrimidine metabolism; dUMP biosynthesis; dUMP from dCTP (dUTP route): step 1/2. In terms of biological role, catalyzes the deamination of dCTP to dUTP. In Rhodospirillum centenum (strain ATCC 51521 / SW), this protein is dCTP deaminase.